The chain runs to 82 residues: Small ribosomal subunit protein bS16 (82 aa).

Belongs to the bacterial ribosomal protein bS16 family.

The sequence is that of Small ribosomal subunit protein bS16 from Francisella tularensis subsp. tularensis (strain FSC 198).